The primary structure comprises 372 residues: Glutamate 5-kinase (372 aa).

Lys-14 is a binding site for ATP. Substrate contacts are provided by Ser-54, Asp-141, and Asn-153. An ATP-binding site is contributed by 173-174 (TD). In terms of domain architecture, PUA spans 280 to 358 (RGTLVLDAGA…DAIESLLGYS (79 aa)).

Belongs to the glutamate 5-kinase family.

The protein resides in the cytoplasm. The enzyme catalyses L-glutamate + ATP = L-glutamyl 5-phosphate + ADP. It functions in the pathway amino-acid biosynthesis; L-proline biosynthesis; L-glutamate 5-semialdehyde from L-glutamate: step 1/2. In terms of biological role, catalyzes the transfer of a phosphate group to glutamate to form L-glutamate 5-phosphate. The protein is Glutamate 5-kinase of Pseudomonas putida (strain W619).